The primary structure comprises 488 residues: Solanidine UDP-glucose glucosyltransferase 1 (488 aa).

His23 acts as the Proton acceptor in catalysis. Residue His23 participates in an anthocyanidin binding. Residue Asp127 is the Charge relay of the active site. UDP-alpha-D-glucose-binding residues include Val352, Gln354, His369, Asn373, Ser374, and Glu377. Ala392 contributes to the an anthocyanidin binding site. Residues Asp393 and Gln394 each coordinate UDP-alpha-D-glucose.

It belongs to the UDP-glycosyltransferase family. As to expression, expressed in the shoot apical meristem (SAM) and tuber.

The catalysed reaction is solasodine + UDP-alpha-D-glucose = solasodine 3-beta-D-glucoside + UDP + H(+). The enzyme catalyses solanidine + UDP-alpha-D-glucose = solanidine 3-O-beta-D-glucopyranoside + UDP + H(+). It carries out the reaction tomatidine + UDP-alpha-D-glucose = tomatidine 3-O-beta-D-glucopyranoside + UDP + H(+). Functionally, glucosyltransferase involved in the glucosylation of the steroidal alkaloid aglycons solanidine, solasodine and tomatidine to produce their corresponding glycoalkaloids. In Solanum tuberosum (Potato), this protein is Solanidine UDP-glucose glucosyltransferase 1.